Here is a 517-residue protein sequence, read N- to C-terminus: Crotonobetaine/carnitine--CoA ligase (517 aa).

It belongs to the ATP-dependent AMP-binding enzyme family.

It catalyses the reaction 4-(trimethylamino)butanoate + ATP + CoA = 4-(trimethylamino)butanoyl-CoA + AMP + diphosphate. It carries out the reaction crotonobetaine + ATP + CoA = crotonobetainyl-CoA + AMP + diphosphate. The catalysed reaction is (R)-carnitine + ATP + CoA = (R)-carnitinyl-CoA + AMP + diphosphate. Its pathway is amine and polyamine metabolism; carnitine metabolism. Functionally, catalyzes the transfer of CoA to carnitine, generating the initial carnitinyl-CoA needed for the CaiB reaction cycle. Also has activity toward crotonobetaine and gamma-butyrobetaine. In Salmonella enteritidis PT4 (strain P125109), this protein is Crotonobetaine/carnitine--CoA ligase.